Here is a 236-residue protein sequence, read N- to C-terminus: tRNA (guanine-N(7)-)-methyltransferase (236 aa).

S-adenosyl-L-methionine contacts are provided by Asp-35, Glu-60, Asn-87, and Asp-113. Asp-113 is an active-site residue. Substrate contacts are provided by Lys-117 and Asp-149.

Belongs to the class I-like SAM-binding methyltransferase superfamily. TrmB family.

The catalysed reaction is guanosine(46) in tRNA + S-adenosyl-L-methionine = N(7)-methylguanosine(46) in tRNA + S-adenosyl-L-homocysteine. Its pathway is tRNA modification; N(7)-methylguanine-tRNA biosynthesis. Catalyzes the formation of N(7)-methylguanine at position 46 (m7G46) in tRNA. The chain is tRNA (guanine-N(7)-)-methyltransferase from Prochlorococcus marinus (strain MIT 9303).